Reading from the N-terminus, the 201-residue chain is 3-isopropylmalate dehydratase small subunit (201 aa).

This sequence belongs to the LeuD family. LeuD type 1 subfamily. As to quaternary structure, heterodimer of LeuC and LeuD.

It catalyses the reaction (2R,3S)-3-isopropylmalate = (2S)-2-isopropylmalate. Its pathway is amino-acid biosynthesis; L-leucine biosynthesis; L-leucine from 3-methyl-2-oxobutanoate: step 2/4. Catalyzes the isomerization between 2-isopropylmalate and 3-isopropylmalate, via the formation of 2-isopropylmaleate. The sequence is that of 3-isopropylmalate dehydratase small subunit from Shewanella halifaxensis (strain HAW-EB4).